A 405-amino-acid polypeptide reads, in one-letter code: FAD-dependent monooxygenase thnD (405 aa).

FAD contacts are provided by E30, A45, R106, D308, and G321.

This sequence belongs to the paxM FAD-dependent monooxygenase family. Requires FAD as cofactor.

In terms of biological role, FAD-dependent monooxygenase; part of the gene cluster that produces the tetronate natural products trihazones. Transcription analysis of thnD confirmed this gene is expressed, hence its role in the biosynthetic pathway remains cryptic. The pathway begins with the formation of trihazone A by the hybrid PKS-NRPS synthetase thnA and the trans-enoyl reductase thnE. Trihazone A is further decarboxylated by the 2-oxoglutarate-dependent dioxygenase thnC to produce trihazone D. The function of the FAD-dependent monooxygenase thnD has still to be identified. The protein is FAD-dependent monooxygenase thnD of Trichoderma harzianum (Hypocrea lixii).